A 445-amino-acid chain; its full sequence is Phosphoglucosamine mutase (445 aa).

Ser102 functions as the Phosphoserine intermediate in the catalytic mechanism. Mg(2+)-binding residues include Ser102, Asp240, Asp242, and Asp244. Ser102 is subject to Phosphoserine.

This sequence belongs to the phosphohexose mutase family. Mg(2+) is required as a cofactor. Activated by phosphorylation.

It carries out the reaction alpha-D-glucosamine 1-phosphate = D-glucosamine 6-phosphate. In terms of biological role, catalyzes the conversion of glucosamine-6-phosphate to glucosamine-1-phosphate. This chain is Phosphoglucosamine mutase, found in Mycobacterium sp. (strain JLS).